The sequence spans 693 residues: Polyribonucleotide nucleotidyltransferase (693 aa).

Positions 485 and 491 each coordinate Mg(2+). The region spanning 552–611 (PRIMVLEINPSKIGDLIGPSGKNIKKIIEETHTTINIKPEGLVYISAPDQESAEKAAQMV) is the KH domain. The S1 motif domain occupies 621 to 691 (GDIFLGKVIR…SSGRISLTRK (71 aa)).

It belongs to the polyribonucleotide nucleotidyltransferase family. Mg(2+) is required as a cofactor.

The protein resides in the cytoplasm. The catalysed reaction is RNA(n+1) + phosphate = RNA(n) + a ribonucleoside 5'-diphosphate. Involved in mRNA degradation. Catalyzes the phosphorolysis of single-stranded polyribonucleotides processively in the 3'- to 5'-direction. The sequence is that of Polyribonucleotide nucleotidyltransferase from Dictyoglomus thermophilum (strain ATCC 35947 / DSM 3960 / H-6-12).